Here is a 380-residue protein sequence, read N- to C-terminus: Beta sliding clamp (380 aa).

Belongs to the beta sliding clamp family. In terms of assembly, forms a ring-shaped head-to-tail homodimer around DNA which binds and tethers DNA polymerases and other proteins to the DNA. The DNA replisome complex has a single clamp-loading complex (3 tau and 1 each of delta, delta', psi and chi subunits) which binds 3 Pol III cores (1 core on the leading strand and 2 on the lagging strand) each with a beta sliding clamp dimer. Additional proteins in the replisome are other copies of gamma, psi and chi, Ssb, DNA helicase and RNA primase.

It localises to the cytoplasm. In terms of biological role, confers DNA tethering and processivity to DNA polymerases and other proteins. Acts as a clamp, forming a ring around DNA (a reaction catalyzed by the clamp-loading complex) which diffuses in an ATP-independent manner freely and bidirectionally along dsDNA. Initially characterized for its ability to contact the catalytic subunit of DNA polymerase III (Pol III), a complex, multichain enzyme responsible for most of the replicative synthesis in bacteria; Pol III exhibits 3'-5' exonuclease proofreading activity. The beta chain is required for initiation of replication as well as for processivity of DNA replication. This chain is Beta sliding clamp (dnaN), found in Lactococcus lactis subsp. lactis (strain IL1403) (Streptococcus lactis).